The primary structure comprises 942 residues: Protein FAM184B (942 aa).

Disordered regions lie at residues 1–26 (MASALNSKIHPPGTCASSKADARGGS) and 73–97 (QEDLQDTGAETRTRLPQEQSRTSED). Coiled coils occupy residues 89–150 (QEQS…RVLI), 196–337 (EMHQ…DRLM), and 387–495 (SETQ…SLLE). The segment at 486-542 (STKLQNSLLEDPCSRPKKPARDEGLEKLTDEEESSSDEEERTGESVKGKSDLQPPFE) is disordered. Residues 504–513 (PARDEGLEKL) are compositionally biased toward basic and acidic residues. The segment covering 514-526 (TDEEESSSDEEER) has biased composition (acidic residues). Coiled-coil stretches lie at residues 575-619 (NKDS…ESLR) and 686-815 (EKGL…ERRF). Residues 880 to 934 (APPITKSPSLDPSPSCSQPYKPTQLLDGKTASRTQDGEPAQPKEAPQKQGSPHQE) are disordered. Positions 885–900 (KSPSLDPSPSCSQPYK) are enriched in polar residues.

This sequence belongs to the FAM184 family.

The sequence is that of Protein FAM184B (Fam184b) from Mus musculus (Mouse).